Consider the following 216-residue polypeptide: 7-carboxy-7-deazaguanine synthase (216 aa).

Substrate contacts are provided by residues 12-14 (LQG) and Arg-27. The Radical SAM core domain occupies 18–216 (RAGRAAVFCR…LQTHKYLGIP (199 aa)). Residues Cys-31, Cys-46, and Cys-49 each coordinate [4Fe-4S] cluster. A Mg(2+)-binding site is contributed by Thr-51. Residue Thr-93 participates in substrate binding. Residues Gly-95, 136–138 (SPK), and 176–179 (QPRD) each bind S-adenosyl-L-methionine. Pro-216 contacts substrate.

Belongs to the radical SAM superfamily. 7-carboxy-7-deazaguanine synthase family. In terms of assembly, homodimer. It depends on [4Fe-4S] cluster as a cofactor. Requires S-adenosyl-L-methionine as cofactor. Mg(2+) is required as a cofactor.

It carries out the reaction 6-carboxy-5,6,7,8-tetrahydropterin + H(+) = 7-carboxy-7-deazaguanine + NH4(+). The protein operates within purine metabolism; 7-cyano-7-deazaguanine biosynthesis. Its function is as follows. Catalyzes the complex heterocyclic radical-mediated conversion of 6-carboxy-5,6,7,8-tetrahydropterin (CPH4) to 7-carboxy-7-deazaguanine (CDG), a step common to the biosynthetic pathways of all 7-deazapurine-containing compounds. In Nitratidesulfovibrio vulgaris (strain ATCC 29579 / DSM 644 / CCUG 34227 / NCIMB 8303 / VKM B-1760 / Hildenborough) (Desulfovibrio vulgaris), this protein is 7-carboxy-7-deazaguanine synthase.